A 394-amino-acid chain; its full sequence is Phosphoglycerate kinase (394 aa).

Substrate-binding positions include 21–23 (DFN), Arg36, 59–62 (HMGR), Arg118, and Arg151. Residues Lys202, Glu324, and 350-353 (GGDS) each bind ATP.

Belongs to the phosphoglycerate kinase family. Monomer.

The protein resides in the cytoplasm. The catalysed reaction is (2R)-3-phosphoglycerate + ATP = (2R)-3-phospho-glyceroyl phosphate + ADP. Its pathway is carbohydrate degradation; glycolysis; pyruvate from D-glyceraldehyde 3-phosphate: step 2/5. The sequence is that of Phosphoglycerate kinase from Exiguobacterium sibiricum (strain DSM 17290 / CCUG 55495 / CIP 109462 / JCM 13490 / 255-15).